Consider the following 724-residue polypeptide: Pesticidal crystal protein Cry11Ba (724 aa).

This sequence belongs to the delta endotoxin family.

In terms of biological role, promotes colloidosmotic lysis by binding to the midgut epithelial cells of mosquitos. Active on Aedes aegypti, Culex pipiens and Anopheles stephensi larvae. This Bacillus thuringiensis subsp. jegathesan protein is Pesticidal crystal protein Cry11Ba (cry11Ba).